The chain runs to 423 residues: Mitogen-activated protein kinase 9 (423 aa).

Residues 26-321 (YQQLKPIGSG…VDEALRHPYI (296 aa)) enclose the Protein kinase domain. ATP is bound by residues 32 to 40 (IGSGAQGIV) and K55. The active-site Proton acceptor is D151. Position 183 is a phosphothreonine; by MAP2K7 (T183). Residues 183–185 (TPY) carry the TXY motif. The residue at position 185 (Y185) is a Phosphotyrosine; by MAP2K4. The segment covering 366–375 (RSKNGVKDQP) has biased composition (basic and acidic residues). Residues 366 to 423 (RSKNGVKDQPSDAAVSSKATPSQSSSINDISSMSTEHTLASDTDSSLDASTGPLEGCR) form a disordered region. A compositionally biased stretch (low complexity) spans 387–416 (SQSSSINDISSMSTEHTLASDTDSSLDAST).

Belongs to the protein kinase superfamily. CMGC Ser/Thr protein kinase family. MAP kinase subfamily. Interacts with MECOM. Binds to at least four scaffolding proteins, MAPK8IP1/JIP-1, MAPK8IP2/JIP-2, MAPK8IP3/JIP-3/JSAP1 and SPAG9/MAPK8IP4/JIP-4. These proteins also bind other components of the JNK signaling pathway. Interacts with NFATC4. Interacts with ATF7; the interaction does not phosphorylate ATF7 but acts as a docking site for ATF7-associated partners such as JUN. Interacts with BCL10. Interacts with CTNNB1 and GSK3B. Interacts with DCLK2. Interacts with MAPKBP1. Interacts with POU5F1; phosphorylates POU5F1 at 'Ser-347'. Found in a complex with SH3RF1, RAC2, MAP3K7/TAK1, MAP2K7/MKK7, MAPK8IP1/JIP1 and MAPK8/JNK1. It depends on Mg(2+) as a cofactor. Dually phosphorylated on Thr-183 and Tyr-185 by MAP2K7 and MAP2K4, which activates the enzyme. Autophosphorylated in vitro.

The protein localises to the cytoplasm. It localises to the nucleus. The catalysed reaction is L-seryl-[protein] + ATP = O-phospho-L-seryl-[protein] + ADP + H(+). The enzyme catalyses L-threonyl-[protein] + ATP = O-phospho-L-threonyl-[protein] + ADP + H(+). With respect to regulation, activated by threonine and tyrosine phosphorylation by either of two dual specificity kinases, MAP2K4 and MAP2K7. MAP2K4 shows a strong preference for Tyr-185 while MAP2K7 phosphorylates Tyr-183 preferentially. Inhibited by dual specificity phosphatases, such as DUSP1. Functionally, serine/threonine-protein kinase involved in various processes such as cell proliferation, differentiation, migration, transformation and programmed cell death. Extracellular stimuli such as pro-inflammatory cytokines or physical stress stimulate the stress-activated protein kinase/c-Jun N-terminal kinase (SAP/JNK) signaling pathway. In this cascade, two dual specificity kinases MAP2K4/MKK4 and MAP2K7/MKK7 phosphorylate and activate MAPK9/JNK2. In turn, MAPK9/JNK2 phosphorylates a number of transcription factors, primarily components of AP-1 such as JUN and ATF2 and thus regulates AP-1 transcriptional activity. In response to oxidative or ribotoxic stresses, inhibits rRNA synthesis by phosphorylating and inactivating the RNA polymerase 1-specific transcription initiation factor RRN3. Promotes stressed cell apoptosis by phosphorylating key regulatory factors including TP53 and YAP1. In T-cells, MAPK8 and MAPK9 are required for polarized differentiation of T-helper cells into Th1 cells. Upon T-cell receptor (TCR) stimulation, is activated by CARMA1, BCL10, MAP2K7 and MAP3K7/TAK1 to regulate JUN protein levels. Plays an important role in the osmotic stress-induced epithelial tight-junctions disruption. When activated, promotes beta-catenin/CTNNB1 degradation and inhibits the canonical Wnt signaling pathway. Also participates in neurite growth in spiral ganglion neurons. Phosphorylates the CLOCK-BMAL1 heterodimer and plays a role in the regulation of the circadian clock. Phosphorylates POU5F1, which results in the inhibition of POU5F1's transcriptional activity and enhances its proteasomal degradation. Phosphorylates ALKBH5 in response to reactive oxygen species (ROS), promoting ALKBH5 sumoylation and inactivation. The protein is Mitogen-activated protein kinase 9 (Mapk9) of Rattus norvegicus (Rat).